The sequence spans 202 residues: Recombination protein RecR (202 aa).

The C4-type zinc finger occupies 61 to 76; it reads CARCNSFTEDEVCATC. The region spanning 84–179 is the Toprim domain; it reads GLLCIVETPA…KVTRLARGVP (96 aa).

The protein belongs to the RecR family.

In terms of biological role, may play a role in DNA repair. It seems to be involved in an RecBC-independent recombinational process of DNA repair. It may act with RecF and RecO. The sequence is that of Recombination protein RecR from Bordetella bronchiseptica (strain ATCC BAA-588 / NCTC 13252 / RB50) (Alcaligenes bronchisepticus).